The primary structure comprises 511 residues: Bifunctional purine biosynthesis protein PurH (511 aa).

Positions Met-1–Val-145 constitute an MGS-like domain.

The protein belongs to the PurH family.

The catalysed reaction is (6R)-10-formyltetrahydrofolate + 5-amino-1-(5-phospho-beta-D-ribosyl)imidazole-4-carboxamide = 5-formamido-1-(5-phospho-D-ribosyl)imidazole-4-carboxamide + (6S)-5,6,7,8-tetrahydrofolate. It catalyses the reaction IMP + H2O = 5-formamido-1-(5-phospho-D-ribosyl)imidazole-4-carboxamide. It participates in purine metabolism; IMP biosynthesis via de novo pathway; 5-formamido-1-(5-phospho-D-ribosyl)imidazole-4-carboxamide from 5-amino-1-(5-phospho-D-ribosyl)imidazole-4-carboxamide (10-formyl THF route): step 1/1. It functions in the pathway purine metabolism; IMP biosynthesis via de novo pathway; IMP from 5-formamido-1-(5-phospho-D-ribosyl)imidazole-4-carboxamide: step 1/1. The sequence is that of Bifunctional purine biosynthesis protein PurH from Bacillus cereus (strain Q1).